Reading from the N-terminus, the 204-residue chain is MSKRHSSKYKIDRRMGENIWGRPKSPVNRREYGPGQHGQRRRSKISDYGLQLKAKQKLKGYYGDVTEKQFRRSYDDASKLKGDTSQNLIGILERRLDMIVYRAKFAPTIFAARQLVSHGHIRVNGVKCNIASRRVNPGDEISLGSKAQEMALVLEAQSLAERDIPDYVLPDGNTKVTFVRIPTLDEVPYPVKMEPNLVVEFYSR.

Positions 1–46 are disordered; sequence MSKRHSSKYKIDRRMGENIWGRPKSPVNRREYGPGQHGQRRRSKIS. An S4 RNA-binding domain is found at 94–157; it reads RRLDMIVYRA…QEMALVLEAQ (64 aa).

Belongs to the universal ribosomal protein uS4 family. Part of the 30S ribosomal subunit. Contacts protein S5. The interaction surface between S4 and S5 is involved in control of translational fidelity.

One of the primary rRNA binding proteins, it binds directly to 16S rRNA where it nucleates assembly of the body of the 30S subunit. In terms of biological role, with S5 and S12 plays an important role in translational accuracy. The polypeptide is Small ribosomal subunit protein uS4 (Zymomonas mobilis subsp. mobilis (strain ATCC 31821 / ZM4 / CP4)).